Consider the following 60-residue polypeptide: Homeobox protein engrailed-like B (60 aa).

Positions 1–41 (VEQLQRLKSEFGASRYLTEARRQALAQELRLNEAQIKIWFQ) form a DNA-binding region, homeobox.

The protein belongs to the engrailed homeobox family.

The protein localises to the nucleus. The protein is Homeobox protein engrailed-like B of Myxine glutinosa (Atlantic hagfish).